The following is a 79-amino-acid chain: uncharacterized protein (79 aa).

A TM2 domain is found at 3 to 54 (SKKNKIVAALLAFFFGGLGIHKFYLGRVGQGILYILFCWTGIPSIIAFIEFI). Transmembrane regions (helical) follow at residues 8–28 (IVAA…FYLG) and 37–57 (ILFC…IIFL).

Its subcellular location is the cell membrane. This is an uncharacterized protein from Bacillus subtilis (strain 168).